Here is a 70-residue protein sequence, read N- to C-terminus: Brevinin-1MT2 (70 aa).

Residues 1–22 (MFTLKKSMLLLFFLGTINLSLC) form the signal peptide. Positions 23–44 (EQERNADEEERRDDDEMDVEVE) are excised as a propeptide. A disulfide bridge links cysteine 64 with cysteine 70.

Belongs to the frog skin active peptide (FSAP) family. Brevinin subfamily. As to expression, expressed by the skin glands.

It is found in the secreted. Functionally, antimicrobial peptide with activity against a variety of Gram-negative and Gram-positive bacteria and against fungi. Shows strong hemolytic activity against human erythrocytes. This is Brevinin-1MT2 from Amolops mantzorum (Sichuan torrent frog).